A 542-amino-acid polypeptide reads, in one-letter code: MTFSEILDRVGSMGPFQFLHVALLGFPILGMANHNLLQIFTATTPSHHCRPPPNASAGPWVLPVNQNGQTERCLRFVHPPNASLPNDTQGATEPCLDGWVYNSTRDTIVTEWDLVCSSNKLKEMAQSIFMAGILIGGLVLGDLSDRFGRKPILTCCYLLLAASGSSTAFSPTLPIYMVFRFLCGFSISGISLSTVILNVEWVPTKMRAITSTAIGYCYTIGQFILPGLAYAIPQWRWLQLTVSVPYFIFSLLSWWIPESIRWLVLAGKSSKALKILRRVATFNGKKEEGEKLSLEELKLSLQKDISLAKAKYSTADLFRTPILRRVTLCLSLAWFATGFAYYSLAMGVEEFGVNIYILQIIFGGVDIPAKFITILSLSYLGRHITQGAALILAGAAILSLIFVPMDMSLLRTILAVFGKGCLSGSFSCLFLYTSELFPTVIRQTGMGISNVWARVGSMISPLVKITGEIQPFIPNIIYGTVALLGGSAALFLPETLNQPLPETLEDMENWFLQSKKLKQEPEAEKASQRIPLQPSGPGVDRS.

At 1-9 the chain is on the cytoplasmic side; it reads MTFSEILDR. Residue serine 4 is modified to Phosphoserine. Residues 10–30 form a helical membrane-spanning segment; the sequence is VGSMGPFQFLHVALLGFPILG. Residues 31–123 lie on the Extracellular side of the membrane; sequence MANHNLLQIF…LVCSSNKLKE (93 aa). N-linked (GlcNAc...) asparagine glycosylation is present at asparagine 86. The chain crosses the membrane as a helical span at residues 124 to 144; it reads MAQSIFMAGILIGGLVLGDLS. The Cytoplasmic segment spans residues 145–150; sequence DRFGRK. The helical transmembrane segment at 151 to 171 threads the bilayer; that stretch reads PILTCCYLLLAASGSSTAFSP. Over 172-176 the chain is Extracellular; the sequence is TLPIY. A helical transmembrane segment spans residues 177–197; the sequence is MVFRFLCGFSISGISLSTVIL. Over 198–212 the chain is Cytoplasmic; that stretch reads NVEWVPTKMRAITST. Residues 213–233 traverse the membrane as a helical segment; the sequence is AIGYCYTIGQFILPGLAYAIP. Topologically, residues 234-236 are extracellular; the sequence is QWR. Residues 237–257 traverse the membrane as a helical segment; the sequence is WLQLTVSVPYFIFSLLSWWIP. Over 258–327 the chain is Cytoplasmic; the sequence is ESIRWLVLAG…FRTPILRRVT (70 aa). Residues 328–348 traverse the membrane as a helical segment; the sequence is LCLSLAWFATGFAYYSLAMGV. Residues 349–354 lie on the Extracellular side of the membrane; that stretch reads EEFGVN. Residues 355–375 traverse the membrane as a helical segment; it reads IYILQIIFGGVDIPAKFITIL. Topologically, residues 376–389 are cytoplasmic; it reads SLSYLGRHITQGAA. Residues 390 to 410 traverse the membrane as a helical segment; it reads LILAGAAILSLIFVPMDMSLL. Position 411 (arginine 411) is a topological domain, extracellular. The helical transmembrane segment at 412 to 432 threads the bilayer; the sequence is TILAVFGKGCLSGSFSCLFLY. Over 433-471 the chain is Cytoplasmic; it reads TSELFPTVIRQTGMGISNVWARVGSMISPLVKITGEIQP. A helical transmembrane segment spans residues 472 to 492; it reads FIPNIIYGTVALLGGSAALFL. The Extracellular segment spans residues 493-542; it reads PETLNQPLPETLEDMENWFLQSKKLKQEPEAEKASQRIPLQPSGPGVDRS. Residues 518 to 527 show a composition bias toward basic and acidic residues; sequence KQEPEAEKAS. Residues 518-542 are disordered; that stretch reads KQEPEAEKASQRIPLQPSGPGVDRS.

It belongs to the major facilitator (TC 2.A.1) superfamily. Organic cation transporter (TC 2.A.1.19) family.

The protein localises to the basolateral cell membrane. It catalyses the reaction estrone 3-sulfate(out) + glutarate(in) = estrone 3-sulfate(in) + glutarate(out). The catalysed reaction is estrone 3-sulfate(in) + 2-oxoglutarate(out) = estrone 3-sulfate(out) + 2-oxoglutarate(in). The enzyme catalyses glutarate(in) + 2-oxoglutarate(out) = glutarate(out) + 2-oxoglutarate(in). It carries out the reaction urate(in) + 2-oxoglutarate(out) = urate(out) + 2-oxoglutarate(in). It catalyses the reaction taurocholate(out) + glutarate(in) = taurocholate(in) + glutarate(out). The catalysed reaction is dehydroepiandrosterone 3-sulfate(out) + glutarate(in) = dehydroepiandrosterone 3-sulfate(in) + glutarate(out). The enzyme catalyses prostaglandin F2alpha(out) + glutarate(in) = prostaglandin F2alpha(in) + glutarate(out). It carries out the reaction prostaglandin F2alpha(out) + 2-oxoglutarate(in) = prostaglandin F2alpha(in) + 2-oxoglutarate(out). It catalyses the reaction (R)-carnitine(out) + 2-oxoglutarate(in) = (R)-carnitine(in) + 2-oxoglutarate(out). The catalysed reaction is glutarate(in) + (R)-carnitine(out) = glutarate(out) + (R)-carnitine(in). The enzyme catalyses prostaglandin E2(out) + 2-oxoglutarate(in) = prostaglandin E2(in) + 2-oxoglutarate(out). It carries out the reaction prostaglandin E2(out) + glutarate(in) = prostaglandin E2(in) + glutarate(out). It catalyses the reaction urate(in) + glutarate(out) = urate(out) + glutarate(in). The catalysed reaction is taurocholate(out) + 2-oxoglutarate(in) = taurocholate(in) + 2-oxoglutarate(out). The enzyme catalyses dehydroepiandrosterone 3-sulfate(out) + 2-oxoglutarate(in) = dehydroepiandrosterone 3-sulfate(in) + 2-oxoglutarate(out). It carries out the reaction kynurenate(out) + a dicarboxylate(in) = kynurenate(in) + a dicarboxylate(out). It catalyses the reaction (indol-3-yl)acetate(out) + a dicarboxylate(in) = (indol-3-yl)acetate(in) + a dicarboxylate(out). The catalysed reaction is indoxyl sulfate(out) + a dicarboxylate(in) = indoxyl sulfate(in) + a dicarboxylate(out). The enzyme catalyses N-benzoylglycine(out) + a dicarboxylate(in) = N-benzoylglycine(in) + a dicarboxylate(out). It carries out the reaction 3-carboxy-4-methyl-5-propyl-2-furanpropanoate(out) + a dicarboxylate(in) = 3-carboxy-4-methyl-5-propyl-2-furanpropanoate(in) + a dicarboxylate(out). It catalyses the reaction (6R)-L-erythro-5,6,7,8-tetrahydrobiopterin(out) + a dicarboxylate(in) = (6R)-L-erythro-5,6,7,8-tetrahydrobiopterin(in) + a dicarboxylate(out). The catalysed reaction is L-erythro-7,8-dihydrobiopterin(out) + a dicarboxylate(in) = L-erythro-7,8-dihydrobiopterin(in) + a dicarboxylate(out). The enzyme catalyses L-sepiapterin(out) + a dicarboxylate(in) = L-sepiapterin(in) + a dicarboxylate(out). Functionally, functions as an organic anion/dicarboxylate exchanger that couples organic anion uptake indirectly to the sodium gradient. Transports organic anions such as estrone 3-sulfate (E1S) and urate in exchange for dicarboxylates such as glutarate or ketoglutarate (2-oxoglutarate). Plays an important role in the excretion of endogenous and exogenous organic anions, especially from the kidney and the brain. E1S transport is pH- and chloride-dependent and may also involve E1S/cGMP exchange. Responsible for the transport of prostaglandin E2 (PGE2) and prostaglandin F2(alpha) (PGF2(alpha)) in the basolateral side of the renal tubule. Involved in the transport of neuroactive tryptophan metabolites kynurenate and xanthurenate. Functions as a biopterin transporters involved in the uptake and the secretion of coenzymes tetrahydrobiopterin (BH4), dihydrobiopterin (BH2) and sepiapterin to urine, thereby determining baseline levels of blood biopterins. May be involved in the basolateral transport of steviol, a metabolite of the popular sugar substitute stevioside. May participate in the detoxification/ renal excretion of drugs and xenobiotics, such as the histamine H(2)-receptor antagonists fexofenadine and cimetidine, the antibiotic benzylpenicillin (PCG), the anionic herbicide 2,4-dichloro-phenoxyacetate (2,4-D), the diagnostic agent p-aminohippurate (PAH), the antiviral acyclovir (ACV), and the mycotoxin ochratoxin (OTA), by transporting these exogenous organic anions across the cell membrane in exchange for dicarboxylates such as 2-oxoglutarate. Contributes to the renal uptake of potent uremic toxins (indoxyl sulfate (IS), indole acetate (IA), hippurate/N-benzoylglycine (HA) and 3-carboxy-4-methyl-5-propyl-2-furanpropionate (CMPF)), pravastatin, PCG, E1S and dehydroepiandrosterone sulfate (DHEAS), and is partly involved in the renal uptake of temocaprilat (an angiotensin-converting enzyme (ACE) inhibitor). May contribute to the release of cortisol in the adrenals. Involved in one of the detoxification systems on the choroid plexus (CP), removes substrates such as E1S or taurocholate (TC), PCG, 2,4-D and PAH, from the cerebrospinal fluid (CSF) to the blood for eventual excretion in urine and bile. Also contributes to the uptake of several other organic compounds such as the prostanoids prostaglandin E(2) and prostaglandin F(2-alpha), L-carnitine, and the therapeutic drugs allopurinol, 6-mercaptopurine (6-MP) and 5-fluorouracil (5-FU). Mediates the transport of PAH, PCG, and the statins pravastatin and pitavastatin, from the cerebrum into the blood circulation across the blood-brain barrier (BBB). In summary, plays a role in the efflux of drugs and xenobiotics, helping reduce their undesired toxicological effects on the body. This is Organic anion transporter 3 (SLC22A8) from Oryctolagus cuniculus (Rabbit).